Consider the following 623-residue polypeptide: Heterogeneous nuclear ribonucleoprotein Q (623 aa).

A2 is subject to N-acetylalanine. S159 carries the phosphoserine modification. 3 RRM domains span residues 162 to 241 (TEIF…ISVA), 243 to 325 (NRLF…WADP), and 338 to 408 (KVLF…FAKP). K168 is covalently cross-linked (Glycyl lysine isopeptide (Lys-Gly) (interchain with G-Cter in SUMO2)). K221 carries the N6-acetyllysine modification. N6-acetyllysine is present on K363. The residue at position 373 (Y373) is a Phosphotyrosine. Residues 400–561 (NIEIVFAKPP…GARGGRGGNV (162 aa)) form an interaction with APOBEC1 region. R444 carries the post-translational modification Asymmetric dimethylarginine; by PRMT1; alternate. The residue at position 444 (R444) is an Omega-N-methylarginine; by PRMT1; alternate. Repeat copies occupy residues 448–450 (RGG), 451–453 (RGG), 460–464 (YYGYE), 469–472 (YYGY), 478–480 (RGG), and 485–488 (YYGY). The tract at residues 448-559 (RGGRGGYGYP…VRGARGGRGG (112 aa)) is 8 X 3 AA repeats of R-G-G. Residues 460–488 (YYGYEDYYDYYGYDYHNYRGGYEDPYYGY) form a 3 X 4 AA repeats of Y-Y-G-Y region. R496 carries the omega-N-methylarginine; by PRMT1 modification. Residues 497-623 (GRGGRGARGA…YQDTFGQQWK (127 aa)) are disordered. A 1-4 repeat occupies 498–500 (RGG). Residues 504–522 (RGAAPSRGRGAAPPRGRAG) are compositionally biased toward low complexity. R510 bears the Asymmetric dimethylarginine; by PRMT1 mark. Residue R518 is modified to Asymmetric dimethylarginine; by PRMT1; alternate. Residue R518 is modified to Omega-N-methylarginine; by PRMT1; alternate. The tract at residues 518–549 (RGRAGYSQRGGPGSARGVRGARGGAQQQRGRG) is interaction with SMN. Position 526 is an asymmetric dimethylarginine; alternate (R526). R526 bears the Omega-N-methylarginine; alternate mark. A 1-5 repeat occupies 526–528 (RGG). Asymmetric dimethylarginine; by PRMT1; alternate occurs at positions 536 and 539. 2 positions are modified to omega-N-methylarginine; by PRMT1; alternate: R536 and R539. A run of 3 repeats spans residues 539–541 (RGG), 554–556 (RGG), and 557–559 (RGG). The span at 550–562 (VRGARGGRGGNVG) shows a compositional bias: gly residues. Residues 564–578 (KRKADGYNQPDTKRR) carry the Bipartite nuclear localization signal motif. The span at 580-595 (TNNQNWGSQPIAQQPL) shows a compositional bias: polar residues. S587 carries the phosphoserine modification. K607 is covalently cross-linked (Glycyl lysine isopeptide (Lys-Gly) (interchain with G-Cter in SUMO2)). The span at 611-623 (QEFYQDTFGQQWK) shows a compositional bias: polar residues.

Identified in the spliceosome C complex. Component of the coding region determinant (CRD)-mediated complex, composed of DHX9, HNRNPU, IGF2BP1, SYNCRIP and YBX1. Identified in a mRNP complex, at least composed of DHX9, DDX3X, ELAVL1, HNRNPU, IGF2BP1, ILF3, PABPC1, PCBP2, PTBP2, STAU1, STAU2, SYNCRIP and YBX1. Identified in a mRNP granule complex, at least composed of ACTB, ACTN4, DHX9, ERG, HNRNPA1, HNRNPA2B1, HNRNPAB, HNRNPD, HNRNPL, HNRNPR, HNRNPU, HSPA1, HSPA8, IGF2BP1, ILF2, ILF3, NCBP1, NCL, PABPC1, PABPC4, PABPN1, RPLP0, RPS3, RPS3A, RPS4X, RPS8, RPS9, SYNCRIP, YBX1 and untranslated mRNAs. Interacts with GTPBP1. Isoform 1 is a component of the APOB mRNA editosome complex. Isoform 1 interacts with APOBEC1 and A1CF. Part of a complex associated with the FOS mCRD domain and consisting of PABPC1, PAIP1, CSDE1/UNR, HNRPD and SYNCRIP. Isoform 2 interacts with HNRPR. Interacts with POLR2A hyperphosphorylated C-terminal domain. Interacts with HABP4. Identified in a histone pre-mRNA complex, at least composed of ERI1, LSM11, SLBP, SNRPB, SYNCRIP and YBX1. Isoform 1 and isoform 2 interact with SMN. Isoform 2 interacts through its C-terminal domain with SYT7, SYT8 and SYT9. The non-phosphorylated and phosphorylated forms are colocalized with PAIP1 in polysomes. In terms of processing, phosphorylated on tyrosine. The membrane-bound form found in microsomes is phosphorylated in vitro by insulin receptor tyrosine kinase (INSR). Phosphorylation is inhibited upon binding to RNA, whereas the cytoplasmic form is poorly phosphorylated. In terms of tissue distribution, ubiquitous. Detected in heart, brain, spleen, lung, liver, skeletal muscle, adipocytes, kidney and testis.

It localises to the nucleus. Its subcellular location is the nucleoplasm. The protein resides in the microsome. The protein localises to the cytoplasm. Functionally, heterogeneous nuclear ribonucleoprotein (hnRNP) implicated in mRNA processing mechanisms. Component of the CRD-mediated complex that promotes MYC mRNA stability. Isoform 1 and isoform 2 are associated in vitro with pre-mRNA, splicing intermediates and mature mRNA protein complexes. Isoform 1 binds to apoB mRNA AU-rich sequences. Isoform 1 is part of the APOB mRNA editosome complex and may modulate the postranscriptional C to U RNA-editing of the APOB mRNA through either by binding to A1CF (APOBEC1 complementation factor), to APOBEC1 or to RNA itself. May be involved in translationally coupled mRNA turnover. Implicated with other RNA-binding proteins in the cytoplasmic deadenylation/translational and decay interplay of the FOS mRNA mediated by the major coding-region determinant of instability (mCRD) domain. Interacts in vitro preferentially with poly(A) and poly(U) RNA sequences. Isoform 2 may be involved in cytoplasmic vesicle-based mRNA transport through interaction with synaptotagmins. This Mus musculus (Mouse) protein is Heterogeneous nuclear ribonucleoprotein Q (Syncrip).